Consider the following 375-residue polypeptide: tRNA-specific 2-thiouridylase MnmA 3 (375 aa).

Residues 11–18 (GMSGGIDS) and methionine 37 contribute to the ATP site. The active-site Nucleophile is the cysteine 104. A disulfide bridge links cysteine 104 with cysteine 201. Residue glycine 128 participates in ATP binding. Residues 150–152 (KDQ) are interaction with tRNA. Cysteine 201 functions as the Cysteine persulfide intermediate in the catalytic mechanism. Positions 309–310 (RY) are interaction with tRNA.

It belongs to the MnmA/TRMU family.

The protein resides in the cytoplasm. It catalyses the reaction S-sulfanyl-L-cysteinyl-[protein] + uridine(34) in tRNA + AH2 + ATP = 2-thiouridine(34) in tRNA + L-cysteinyl-[protein] + A + AMP + diphosphate + H(+). Functionally, catalyzes the 2-thiolation of uridine at the wobble position (U34) of tRNA, leading to the formation of s(2)U34. In Phocaeicola vulgatus (strain ATCC 8482 / DSM 1447 / JCM 5826 / CCUG 4940 / NBRC 14291 / NCTC 11154) (Bacteroides vulgatus), this protein is tRNA-specific 2-thiouridylase MnmA 3.